We begin with the raw amino-acid sequence, 378 residues long: MSETSATSLPVTEPLPAPAPAKLVDVASLSLEALSRFVTEELGERAFRAPQIYRWLHQRGATSFDEMTDLSKVLREKLRARAEIVPLVKDCELRSTDGTIKYRWKTRDGRYIESVYMPTEDRRTLCVSTQVGCAMACGFCMTGTMGLKRNLTPSEIVAQVHAVNREVRKNEGHETLRPLSNLVFMGMGEPLHNFENLKTALSILQSEDGPNFSHRHITVSTVGLVPMIERFGKETDVKLAISLNASTDEQRSKTMPVNRKWNIAALLDACRKFPLRQGRRITFEYVLIKGFNDADEDAHRLIELLKGIPVKVNLIPYNENPGLGFHTTGEERAEEFRAILADGHVAAYIRRNRGRDIAGACGQLANRGETQAGTDSTT.

Residue Glu-113 is the Proton acceptor of the active site. Residues 119 to 355 form the Radical SAM core domain; the sequence is TEDRRTLCVS…AAYIRRNRGR (237 aa). Cys-126 and Cys-361 are disulfide-bonded. [4Fe-4S] cluster is bound by residues Cys-133, Cys-137, and Cys-140. S-adenosyl-L-methionine is bound by residues 188 to 189, Ser-220, 242 to 244, and Asn-318; these read GE and SLN. The S-methylcysteine intermediate role is filled by Cys-361.

The protein belongs to the radical SAM superfamily. RlmN family. [4Fe-4S] cluster serves as cofactor.

The protein resides in the cytoplasm. The catalysed reaction is adenosine(2503) in 23S rRNA + 2 reduced [2Fe-2S]-[ferredoxin] + 2 S-adenosyl-L-methionine = 2-methyladenosine(2503) in 23S rRNA + 5'-deoxyadenosine + L-methionine + 2 oxidized [2Fe-2S]-[ferredoxin] + S-adenosyl-L-homocysteine. It catalyses the reaction adenosine(37) in tRNA + 2 reduced [2Fe-2S]-[ferredoxin] + 2 S-adenosyl-L-methionine = 2-methyladenosine(37) in tRNA + 5'-deoxyadenosine + L-methionine + 2 oxidized [2Fe-2S]-[ferredoxin] + S-adenosyl-L-homocysteine. Functionally, specifically methylates position 2 of adenine 2503 in 23S rRNA and position 2 of adenine 37 in tRNAs. m2A2503 modification seems to play a crucial role in the proofreading step occurring at the peptidyl transferase center and thus would serve to optimize ribosomal fidelity. The chain is Dual-specificity RNA methyltransferase RlmN 2 from Myxococcus xanthus (strain DK1622).